The sequence spans 289 residues: ATP synthase gamma chain (289 aa).

It belongs to the ATPase gamma chain family. As to quaternary structure, F-type ATPases have 2 components, CF(1) - the catalytic core - and CF(0) - the membrane proton channel. CF(1) has five subunits: alpha(3), beta(3), gamma(1), delta(1), epsilon(1). CF(0) has three main subunits: a, b and c.

It localises to the cell membrane. In terms of biological role, produces ATP from ADP in the presence of a proton gradient across the membrane. The gamma chain is believed to be important in regulating ATPase activity and the flow of protons through the CF(0) complex. The protein is ATP synthase gamma chain of Hamiltonella defensa subsp. Acyrthosiphon pisum (strain 5AT).